The chain runs to 695 residues: MAP kinase phosphatase with leucine-rich repeats protein 2 (695 aa).

LRR repeat units lie at residues 101 to 122 (SLKS…ITLL), 124 to 145 (NLNH…LSQL), 147 to 167 (SLET…NVCK), 170 to 191 (SLTS…FLNL), 193 to 214 (NLKD…LPNN), 215 to 235 (IEKL…SLIR), 239 to 260 (SLTT…LSCL), 262 to 283 (NVKT…VLGS), 286 to 307 (SLVT…VILL), and 309 to 330 (NLRI…IPTE). A compositionally biased stretch (low complexity) spans 413-426 (SENNEINENNQLLT). 2 disordered regions span residues 413 to 438 (SENN…KNDS) and 492 to 519 (QEQL…QQQQ). In terms of domain architecture, Tyrosine-protein phosphatase spans 556 to 695 (VPDLIIDKLY…LKKFEKDLFK (140 aa)). The Phosphocysteine intermediate role is filled by Cys-639.

This sequence belongs to the protein-tyrosine phosphatase family. Non-receptor class dual specificity subfamily.

The enzyme catalyses O-phospho-L-tyrosyl-[protein] + H2O = L-tyrosyl-[protein] + phosphate. The catalysed reaction is O-phospho-L-seryl-[protein] + H2O = L-seryl-[protein] + phosphate. It carries out the reaction O-phospho-L-threonyl-[protein] + H2O = L-threonyl-[protein] + phosphate. Probable phosphatase with dual specificity toward Ser/Thr and Tyr-containing proteins. This chain is MAP kinase phosphatase with leucine-rich repeats protein 2 (mpl2), found in Dictyostelium discoideum (Social amoeba).